The primary structure comprises 332 residues: Glycerol-3-phosphate dehydrogenase [NAD(P)+] (332 aa).

Residues S11, W12, R32, R33, and K106 each coordinate NADPH. K106 and G136 together coordinate sn-glycerol 3-phosphate. A140 serves as a coordination point for NADPH. Sn-glycerol 3-phosphate contacts are provided by K191, D244, S254, R255, and N256. K191 acts as the Proton acceptor in catalysis. Position 255 (R255) interacts with NADPH. V280 and E282 together coordinate NADPH.

Belongs to the NAD-dependent glycerol-3-phosphate dehydrogenase family.

The protein localises to the cytoplasm. The enzyme catalyses sn-glycerol 3-phosphate + NAD(+) = dihydroxyacetone phosphate + NADH + H(+). It catalyses the reaction sn-glycerol 3-phosphate + NADP(+) = dihydroxyacetone phosphate + NADPH + H(+). The protein operates within membrane lipid metabolism; glycerophospholipid metabolism. In terms of biological role, catalyzes the reduction of the glycolytic intermediate dihydroxyacetone phosphate (DHAP) to sn-glycerol 3-phosphate (G3P), the key precursor for phospholipid synthesis. The sequence is that of Glycerol-3-phosphate dehydrogenase [NAD(P)+] from Corynebacterium glutamicum (strain R).